The sequence spans 328 residues: Protein-glutamine deamidase Cif (328 aa).

The segment at 1 to 68 is disordered; sequence MLEHGVMKIP…TNRTGENPMI (68 aa). Residues 52-63 are compositionally biased toward polar residues; sequence RSSSISNTNRTG. Catalysis depends on residues cysteine 156, histidine 211, and glutamine 231.

This sequence belongs to the Cif family.

It is found in the secreted. The protein resides in the host nucleus. The enzyme catalyses L-glutaminyl-[protein] + H2O = L-glutamyl-[protein] + NH4(+). Its function is as follows. Protein-glutamine deamidase effector that inhibits the host cell cycle and other key cellular processes such as the actin network and programmed-cell death. Acts by mediating the side chain deamidation of 'Gln-40' of host NEDD8, converting it to glutamate, thereby abolishing the activity of cullin-RING-based E3 ubiquitin-protein ligase complexes (CRL complexes). Inactivation of CRL complexes prevents ubiquitination and subsequent degradation of the cyclin-dependent kinase inhibitors CDKN1A/p21 and CDKN1B/p27, leading to G1 and G2 cell cycle arrests in host cells. Deamidation of 'Gln-40' of host NEDD8 also triggers macrophage-specific programmed cell death. Also able to catalyze deamidation of 'Gln-40' of host ubiquitin in vitro; however, NEDD8 constitutes the preferred substrate in vivo. Also regulates the host NF-kappa-B signaling via activation of MAPK/ERK cascade: activation of host MAPK/ERK cascade is independent of CRL complexes inhibition, suggesting that Cif has other host protein targets than NEDD8. This chain is Protein-glutamine deamidase Cif, found in Burkholderia pseudomallei (strain K96243).